The sequence spans 283 residues: uncharacterized protein (283 aa).

A run of 3 helical transmembrane segments spans residues 18–38 (VYDIIVVIVVMALATIIAKLI), 61–81 (VIYFGIIIVAFIAVLPALGLD), and 94–114 (IVLGFASQSVVANLVSGIFLI).

The protein belongs to the MscS (TC 1.A.23) family.

The protein resides in the cell membrane. This is an uncharacterized protein from Archaeoglobus fulgidus (strain ATCC 49558 / DSM 4304 / JCM 9628 / NBRC 100126 / VC-16).